The sequence spans 210 residues: Pyridoxine/pyridoxamine 5'-phosphate oxidase (210 aa).

Residues 7 to 10 and K65 each bind substrate; that span reads RQSY. Residues 60 to 65, 75 to 76, R81, K82, and Q104 contribute to the FMN site; these read RIVLIK and FT. Substrate-binding residues include Y122, R126, and S130. Residues 139–140 and W182 contribute to the FMN site; that span reads QS. 188-190 is a substrate binding site; it reads RLH. R192 serves as a coordination point for FMN.

This sequence belongs to the pyridoxamine 5'-phosphate oxidase family. Homodimer. It depends on FMN as a cofactor.

The enzyme catalyses pyridoxamine 5'-phosphate + O2 + H2O = pyridoxal 5'-phosphate + H2O2 + NH4(+). It carries out the reaction pyridoxine 5'-phosphate + O2 = pyridoxal 5'-phosphate + H2O2. Its pathway is cofactor metabolism; pyridoxal 5'-phosphate salvage; pyridoxal 5'-phosphate from pyridoxamine 5'-phosphate: step 1/1. It participates in cofactor metabolism; pyridoxal 5'-phosphate salvage; pyridoxal 5'-phosphate from pyridoxine 5'-phosphate: step 1/1. Its function is as follows. Catalyzes the oxidation of either pyridoxine 5'-phosphate (PNP) or pyridoxamine 5'-phosphate (PMP) into pyridoxal 5'-phosphate (PLP). The polypeptide is Pyridoxine/pyridoxamine 5'-phosphate oxidase (Bordetella bronchiseptica (strain ATCC BAA-588 / NCTC 13252 / RB50) (Alcaligenes bronchisepticus)).